We begin with the raw amino-acid sequence, 61 residues long: Sec-independent protein translocase protein TatA (61 aa).

Residues 1–21 traverse the membrane as a helical segment; that stretch reads MFGIGMPEMLIILVIILIIFG.

It belongs to the TatA/E family. The Tat system comprises two distinct complexes: a TatABC complex, containing multiple copies of TatA, TatB and TatC subunits, and a separate TatA complex, containing only TatA subunits. Substrates initially bind to the TatABC complex, which probably triggers association of the separate TatA complex to form the active translocon.

Its subcellular location is the cell inner membrane. Its function is as follows. Part of the twin-arginine translocation (Tat) system that transports large folded proteins containing a characteristic twin-arginine motif in their signal peptide across membranes. TatA could form the protein-conducting channel of the Tat system. The chain is Sec-independent protein translocase protein TatA from Syntrophus aciditrophicus (strain SB).